Here is a 368-residue protein sequence, read N- to C-terminus: H-2 class I histocompatibility antigen, K-W28 alpha chain (368 aa).

Positions 1 to 21 (MAPCMLLLLLAAALAPTQTRA) are cleaved as a signal peptide. Residues 22-111 (GPHSLRYFHT…LLRYYNQSAG (90 aa)) form an alpha-1 region. Residues 22 to 305 (GPHSLRYFHT…EPPPSAVSNT (284 aa)) are Extracellular-facing. The N-linked (GlcNAc...) asparagine glycan is linked to Asn107. An alpha-2 region spans residues 112 to 203 (GSHTIQRMYG…KNGNATLLRT (92 aa)). The cysteines at positions 122 and 185 are disulfide-linked. Asn197 is a glycosylation site (N-linked (GlcNAc...) asparagine). The interval 204–295 (DSPKAHVTHH…GLPKPLTLRW (92 aa)) is alpha-3. In terms of domain architecture, Ig-like C1-type spans 206–292 (PKAHVTHHSR…YHQGLPKPLT (87 aa)). A disulfide bridge connects residues Cys224 and Cys280. The segment at 296–305 (EPPPSAVSNT) is connecting peptide. The chain crosses the membrane as a helical span at residues 306-329 (VIIAVLVVLGAAIVTGAVVAFVMM). Residues 330–368 (RRRNTGGKGGDYALAPGSQTSDLSLPDCKVMVHDPHSLA) are Cytoplasmic-facing. Residues Ser350 and Ser353 each carry the phosphoserine modification.

The protein belongs to the MHC class I family. As to quaternary structure, heterodimer of an alpha chain and a beta chain (beta-2-microglobulin).

The protein resides in the membrane. In terms of biological role, involved in the presentation of foreign antigens to the immune system. This Mus musculus (Mouse) protein is H-2 class I histocompatibility antigen, K-W28 alpha chain (H2-K1).